Reading from the N-terminus, the 176-residue chain is Ribosome maturation factor RimP (176 aa).

The protein belongs to the RimP family.

It is found in the cytoplasm. Functionally, required for maturation of 30S ribosomal subunits. This is Ribosome maturation factor RimP from Mycolicibacterium vanbaalenii (strain DSM 7251 / JCM 13017 / BCRC 16820 / KCTC 9966 / NRRL B-24157 / PYR-1) (Mycobacterium vanbaalenii).